Reading from the N-terminus, the 378-residue chain is Glutamate 5-kinase (378 aa).

Residue Lys-19 coordinates ATP. Substrate is bound by residues Ser-60, Asp-147, and Asn-159. ATP-binding positions include 179–180 (SD) and 221–227 (SGGMRTK). Residues 285 to 362 (KGTLTIDAGA…GEMEQLLGYR (78 aa)) enclose the PUA domain.

The protein belongs to the glutamate 5-kinase family.

The protein resides in the cytoplasm. It catalyses the reaction L-glutamate + ATP = L-glutamyl 5-phosphate + ADP. It participates in amino-acid biosynthesis; L-proline biosynthesis; L-glutamate 5-semialdehyde from L-glutamate: step 1/2. Functionally, catalyzes the transfer of a phosphate group to glutamate to form L-glutamate 5-phosphate. In Gluconobacter oxydans (strain 621H) (Gluconobacter suboxydans), this protein is Glutamate 5-kinase.